A 330-amino-acid chain; its full sequence is AP-1-like transcription factor YAP3 (330 aa).

The tract at residues 114–150 (SYSNTNYFSKNNGISPSSRSPSVAHNENVPDDSKAKK) is disordered. Over residues 121–138 (FSKNNGISPSSRSPSVAH) the composition is skewed to polar residues. Serine 135 is modified (phosphoserine). Residues 144 to 207 (DDSKAKKKAQ…TEINAENRLL (64 aa)) enclose the bZIP domain. The segment at 147–168 (KAKKKAQNRAAQKAFRERKEAR) is basic motif. The segment at 172-207 (LQDKLLESERNRQSLLKEIEELRKANTEINAENRLL) is leucine-zipper.

The protein belongs to the bZIP family. YAP subfamily. In terms of assembly, homodimer. Interacts with the C-terminal, cytoplasmic tail of the multidrug resistance ABC transporter PDR5.

It localises to the cytoplasm. Its subcellular location is the nucleus. Functionally, transcription activator involved in the regulation of genes expressed in response to environmental changes. When overexpressed it activates transcription of the multidrug resistance ABC transporter PDR5, thus conferring resistance to the fungicide fluconazole (FCZ) and cycloheximide. When overexpressed, it also confers, independent of PDR5, increased resistance to 4-nitroquinoline-N-oxide (4-NQO). Preferentially binds 5'-TTACTAA-3'. The protein is AP-1-like transcription factor YAP3 (YAP3) of Saccharomyces cerevisiae (strain ATCC 204508 / S288c) (Baker's yeast).